The following is a 713-amino-acid chain: DNA polymerase eta (713 aa).

Residues 9-259 (VALVDMDCFF…MPIRKIRSLG (251 aa)) form the UmuC domain. Mg(2+) is bound by residues D13 and M14. 2 residues coordinate Mn(2+): D13 and M14. R61 provides a ligand contact to a 2'-deoxyribonucleoside 5'-triphosphate. D115 and E116 together coordinate Mg(2+). Mn(2+) is bound by residues D115 and E116. Disordered stretches follow at residues 441–472 (TSFLSSDPSSLPKVPVTSSEAKTQGSGPAVTA) and 495–527 (EASLSSLTAPTQAPMSNSPSKPSLPFQTSQSTG). 2 stretches are compositionally biased toward polar residues: residues 456-466 (VTSSEAKTQGS) and 497-527 (SLSSLTAPTQAPMSNSPSKPSLPFQTSQSTG). The UBZ3-type zinc finger occupies 628-662 (AAEDQVPCEKCGSLVPVWDMPEHMDYHFALELQKS). 4 residues coordinate Zn(2+): C635, C638, H650, and H654. The tract at residues 677 to 705 (VSHQGKRNPKSPLACTNKRPRPEGMQTLE) is disordered. Glycyl lysine isopeptide (Lys-Gly) (interchain with G-Cter in ubiquitin) cross-links involve residues K682, K686, and K694. The PIP-box signature appears at 701-708 (MQTLESFF). K709 participates in a covalent cross-link: Glycyl lysine isopeptide (Lys-Gly) (interchain with G-Cter in ubiquitin).

The protein belongs to the DNA polymerase type-Y family. Interacts with REV1. Interacts with monoubiquitinated PCNA, but not unmodified PCNA. Interacts with POLI; this interaction targets POLI to the replication machinery. Interacts with PALB2 and BRCA2; the interactions are direct and are required to sustain the recruitment of POLH at blocked replication forks and to stimulate POLH-dependent DNA synthesis on D loop substrates. Interacts (via C-terminus) with TRAIP. Interacts with ubiquitin. Interacts with POLDIP2. The cofactor is Mg(2+). It depends on Mn(2+) as a cofactor. Post-translationally, monoubiquitinated by RCHY1/PIRH2. Ubiquitination depends on integrity of the UBZ3-type zinc finger domain and is enhanced by TRAIP. Ubiquitination inhibits the ability of PolH to interact with PCNA and to bypass UV-induced lesions.

It localises to the nucleus. It catalyses the reaction DNA(n) + a 2'-deoxyribonucleoside 5'-triphosphate = DNA(n+1) + diphosphate. With respect to regulation, the enzyme in complex with the DNA substrate binds a third divalent metal cation. The binding of this third divalent cation, which is coordinated by water molecules and two oxygen atoms from DNA and dNTP, is essential for catalyzing the DNA synthesis. Its function is as follows. DNA polymerase specifically involved in the DNA repair by translesion synthesis (TLS). Due to low processivity on both damaged and normal DNA, cooperates with the heterotetrameric (REV3L, REV7, POLD2 and POLD3) POLZ complex for complete bypass of DNA lesions. Inserts one or 2 nucleotide(s) opposite the lesion, the primer is further extended by the tetrameric POLZ complex. In the case of 1,2-intrastrand d(GpG)-cisplatin cross-link, inserts dCTP opposite the 3' guanine. Particularly important for the repair of UV-induced pyrimidine dimers. Although inserts the correct base, may cause base transitions and transversions depending upon the context. May play a role in hypermutation at immunoglobulin genes. Forms a Schiff base with 5'-deoxyribose phosphate at abasic sites, but does not have any lyase activity, preventing the release of the 5'-deoxyribose phosphate (5'-dRP) residue. This covalent trapping of the enzyme by the 5'-dRP residue inhibits its DNA synthetic activity during base excision repair, thereby avoiding high incidence of mutagenesis. Targets POLI to replication foci. The chain is DNA polymerase eta (POLH) from Homo sapiens (Human).